We begin with the raw amino-acid sequence, 721 residues long: Fatty acid oxidation complex subunit alpha (721 aa).

An enoyl-CoA hydratase/isomerase region spans residues 1–190 (MIYEGKAITV…KVGVVDAIVA (190 aa)). Substrate is bound at residue Asp297. The segment at 312 to 721 (RDVKQAAVLG…SFFGQASSEV (410 aa)) is 3-hydroxyacyl-CoA dehydrogenase. Residues Met325, Asp344, 401–403 (VVE), Lys408, and Ser430 each bind NAD(+). The active-site For 3-hydroxyacyl-CoA dehydrogenase activity is the His451. An NAD(+)-binding site is contributed by Asn454. 2 residues coordinate substrate: Asn501 and Tyr660.

The protein in the N-terminal section; belongs to the enoyl-CoA hydratase/isomerase family. In the C-terminal section; belongs to the 3-hydroxyacyl-CoA dehydrogenase family. Heterotetramer of two alpha chains (FadB) and two beta chains (FadA).

The catalysed reaction is a (3S)-3-hydroxyacyl-CoA + NAD(+) = a 3-oxoacyl-CoA + NADH + H(+). It carries out the reaction a (3S)-3-hydroxyacyl-CoA = a (2E)-enoyl-CoA + H2O. It catalyses the reaction a 4-saturated-(3S)-3-hydroxyacyl-CoA = a (3E)-enoyl-CoA + H2O. The enzyme catalyses (3S)-3-hydroxybutanoyl-CoA = (3R)-3-hydroxybutanoyl-CoA. The catalysed reaction is a (3Z)-enoyl-CoA = a 4-saturated (2E)-enoyl-CoA. It carries out the reaction a (3E)-enoyl-CoA = a 4-saturated (2E)-enoyl-CoA. It participates in lipid metabolism; fatty acid beta-oxidation. Its function is as follows. Involved in the aerobic and anaerobic degradation of long-chain fatty acids via beta-oxidation cycle. Catalyzes the formation of 3-oxoacyl-CoA from enoyl-CoA via L-3-hydroxyacyl-CoA. It can also use D-3-hydroxyacyl-CoA and cis-3-enoyl-CoA as substrate. The protein is Fatty acid oxidation complex subunit alpha of Pseudomonas syringae pv. tomato (strain ATCC BAA-871 / DC3000).